Reading from the N-terminus, the 479-residue chain is FAD-dependent monooxygenase atmM (479 aa).

The helical transmembrane segment at 10 to 30 (IIVGGSVAGLTLAHCLQRAGI) threads the bilayer. FAD is bound by residues E36, G50, R109, D309, and A322. Residues 445–465 (WILVLLVIVVSFGLHSPELVI) traverse the membrane as a helical segment.

This sequence belongs to the paxM FAD-dependent monooxygenase family. It depends on FAD as a cofactor.

The protein localises to the membrane. It participates in secondary metabolite biosynthesis. FAD-dependent monooxygenase; part of the ATM1 gene cluster that mediates the biosynthesis of aflatrem, a tremorgenic mycotoxin with acute neurotoxic effects. Synthesis of geranylgeranyl diphosphate (GGPP) by AtmG (a GGPP synthase) precedes condensation of GGPP with indole 3-glycerol phosphate, followed by epoxidation and cyclization by AtmM (a FAD-dependent monooxygenase) and AtmC (a prenyltransferase) to produce paspaline. AtmB is also essential for paspaline production, but its exact role has not been identified yet. AtmP, a cytochrome P450 monooxygenase, subsequently converts paspaline to 13-desoxypaxilline via PC-M6 by removal of the C-30 methyl group and oxidation at C-10. AtmQ, a cytochrome P450 monooxygenase, then catalyzes the oxidation of 13-desoxypaxilline, first at C-7 to produce paspalicine and then at C-13 to form paspalinine. Finally, AtmD prenylates paspalinine to form aflatrem. This chain is FAD-dependent monooxygenase atmM, found in Aspergillus flavus.